The following is a 296-amino-acid chain: uncharacterized protein (296 aa).

The next 2 helical transmembrane spans lie at 82–102 (VVAP…WSVQ) and 117–137 (ISVL…SAIF).

Its subcellular location is the cell membrane. This is an uncharacterized protein from Sinorhizobium fredii (strain NBRC 101917 / NGR234).